Consider the following 203-residue polypeptide: Superoxide dismutase [Mn/Fe] (203 aa).

Residues His-27, His-81, Asp-163, and His-167 each coordinate Fe(3+). Mn(2+) is bound by residues His-27, His-81, Asp-163, and His-167.

It belongs to the iron/manganese superoxide dismutase family. The cofactor is Mn(2+). Fe(3+) serves as cofactor.

The catalysed reaction is 2 superoxide + 2 H(+) = H2O2 + O2. Functionally, destroys superoxide anion radicals which are normally produced within the cells and which are toxic to biological systems. Catalyzes the dismutation of superoxide anion radicals into O2 and H2O2 by successive reduction and oxidation of the transition metal ion at the active site. This is Superoxide dismutase [Mn/Fe] (sodA) from Streptococcus mutans serotype c (strain ATCC 700610 / UA159).